The chain runs to 482 residues: Cytochrome P450 monooxygenase pynD (482 aa).

Positions 1 to 22 are cleaved as a signal peptide; that stretch reads MWRIPVIVALVAGLLYWVRKQG. The N-linked (GlcNAc...) asparagine glycan is linked to Asn-401. Cys-417 contacts heme.

It belongs to the cytochrome P450 family. The cofactor is heme.

It participates in secondary metabolite biosynthesis. Functionally, cytochrome P450 monooxygenase; part of the gene cluster that mediates the biosynthesis of pyranonigrins, a family of antioxidative compounds. The first step of pyranonigrins biosynthesis is performed by the hybrid PKS-NRPS synthetase that condenses 6 malonyl-CoA units to an acetyl starter unit, to form a 1,3,5-trioxotetradecane-6,8-dienyl-ACP. The enoyl reductase (ER) domain of pynA is likely to be functional during the first two rounds of polyketide chain extension, to generate the saturated C-C bonds of the alkyl side chain. PynA subsequently forms the amide bond between the acyl chain and L-serine. Although pynA has a terminal reductase domain, it appears to require the thioesterase pynI for the release of the straight-chain intermediate from pynA via the formation of a tetramic acid pyranonigrin J. The methyltransferase pynC then coverts pyranonigrin J to pyranonigrin I via N-methylation. The FAD-dependent monooxygenase pynG catalyzes an epoxidation-mediated cyclization to form the dihydro-gamma-pyrone moiety, followed by pynD-catalyzed oxidation of the alcohol to the ketone and enolization to yield the characteristic tetramic acid-fused gamma-pyrone core of pyranonigrin H. Pyranonigrin H is substrate of pynH for dehydration-mediated exo-methylene formation from the serine side chain to produce pyranonigrin E, before the oxidase pynE reduces the exo-methylene of pyranonigrin E into a pendant methyl to form pyranonigrin G. The FAD-linked oxidoreductase pynB performs the reverse reaction and converts pyranonigrin G back to pyranonigrin E. The sequence is that of Cytochrome P450 monooxygenase pynD from Aspergillus niger (strain ATCC MYA-4892 / CBS 513.88 / FGSC A1513).